A 215-amino-acid chain; its full sequence is Pyridoxine/pyridoxamine 5'-phosphate oxidase (215 aa).

Residues 9–12 (RREY) and lysine 69 contribute to the substrate site. Residues 64 to 69 (RILLLK), 79 to 80 (FT), lysine 86, and glutamine 108 each bind FMN. Residues tyrosine 126, arginine 130, and serine 134 each contribute to the substrate site. FMN contacts are provided by residues 143–144 (QS) and tryptophan 188. Substrate is bound at residue 194-196 (RLH). Arginine 198 is a binding site for FMN.

This sequence belongs to the pyridoxamine 5'-phosphate oxidase family. As to quaternary structure, homodimer. FMN serves as cofactor.

It carries out the reaction pyridoxamine 5'-phosphate + O2 + H2O = pyridoxal 5'-phosphate + H2O2 + NH4(+). It catalyses the reaction pyridoxine 5'-phosphate + O2 = pyridoxal 5'-phosphate + H2O2. It functions in the pathway cofactor metabolism; pyridoxal 5'-phosphate salvage; pyridoxal 5'-phosphate from pyridoxamine 5'-phosphate: step 1/1. It participates in cofactor metabolism; pyridoxal 5'-phosphate salvage; pyridoxal 5'-phosphate from pyridoxine 5'-phosphate: step 1/1. In terms of biological role, catalyzes the oxidation of either pyridoxine 5'-phosphate (PNP) or pyridoxamine 5'-phosphate (PMP) into pyridoxal 5'-phosphate (PLP). In Pseudomonas paraeruginosa (strain DSM 24068 / PA7) (Pseudomonas aeruginosa (strain PA7)), this protein is Pyridoxine/pyridoxamine 5'-phosphate oxidase.